A 241-amino-acid chain; its full sequence is Thymidylate kinase (241 aa).

17 to 24 (GGEGAGKT) lines the ATP pocket.

This sequence belongs to the thymidylate kinase family.

The enzyme catalyses dTMP + ATP = dTDP + ADP. Its function is as follows. Phosphorylation of dTMP to form dTDP in both de novo and salvage pathways of dTTP synthesis. The chain is Thymidylate kinase from Thermosynechococcus vestitus (strain NIES-2133 / IAM M-273 / BP-1).